Consider the following 468-residue polypeptide: MSSSLWLQCLQQLQEELPATEFSMWVRPLQAELNDNTLTLFAPNRFVLDWVRDKYLNSINRLLQEYCGNDVPSLRFEVGSRPVAAPKPAPTRTPADVAAESSAPAQLQARKPVHKTWDDDAQAIADINHRSNVNPKHKFNNFVEGKSNQLGLAAARQVSDNPGAAYNPLFLYGGTGLGKTHLLHAVGNAIVDNNPNAKVVYMHSERFVQDMVKALQNNAIEEFKRYYRSVDALLIDDIQFFANKERSQEEFFHTFNALLEGNQQIILTSDRYPKEISGVEDRLKSRFGWGLTVAIEPPELETRVAILMKKAEDHQIHLADEVAFFIAKRLRSNVRELEGALNRVIANANFTGRPITIDFVREALRDLLALQEKLVTIDNIQKTVAEYYKIKVADLLSKRRSRSVARPRQLAMALAKELTNHSLPEIGDAFGGRDHTTVLHACRKIEQLREESHDIKEDYSNLIRTLSS.

The segment at 1-84 (MSSSLWLQCL…RFEVGSRPVA (84 aa)) is domain I, interacts with DnaA modulators. The interval 81–104 (RPVAAPKPAPTRTPADVAAESSAP) is disordered. Residues 84–131 (AAPKPAPTRTPADVAAESSAPAQLQARKPVHKTWDDDAQAIADINHRS) are domain II. The tract at residues 132–348 (NVNPKHKFNN…GALNRVIANA (217 aa)) is domain III, AAA+ region. Residues glycine 176, glycine 178, lysine 179, and threonine 180 each contribute to the ATP site. The domain IV, binds dsDNA stretch occupies residues 349–468 (NFTGRPITID…YSNLIRTLSS (120 aa)).

It belongs to the DnaA family. In terms of assembly, oligomerizes as a right-handed, spiral filament on DNA at oriC.

It localises to the cytoplasm. Its function is as follows. Plays an essential role in the initiation and regulation of chromosomal replication. ATP-DnaA binds to the origin of replication (oriC) to initiate formation of the DNA replication initiation complex once per cell cycle. Binds the DnaA box (a 9 base pair repeat at the origin) and separates the double-stranded (ds)DNA. Forms a right-handed helical filament on oriC DNA; dsDNA binds to the exterior of the filament while single-stranded (ss)DNA is stabiized in the filament's interior. The ATP-DnaA-oriC complex binds and stabilizes one strand of the AT-rich DNA unwinding element (DUE), permitting loading of DNA polymerase. After initiation quickly degrades to an ADP-DnaA complex that is not apt for DNA replication. Binds acidic phospholipids. The polypeptide is Chromosomal replication initiator protein DnaA (Vibrio campbellii (strain ATCC BAA-1116)).